Consider the following 146-residue polypeptide: Large ribosomal subunit protein uL24 (146 aa).

Residues 1 to 33 (MKYNPRVTSSRRRNRKPHFTASSSERRVXMSSP) are disordered. The span at 9–18 (SSRRRNRKPH) shows a compositional bias: basic residues.

This sequence belongs to the universal ribosomal protein uL24 family.

In Brassica campestris (Field mustard), this protein is Large ribosomal subunit protein uL24 (RPL26).